We begin with the raw amino-acid sequence, 448 residues long: tRNA modification GTPase MnmE (448 aa).

Positions 25, 82, and 121 each coordinate (6S)-5-formyl-5,6,7,8-tetrahydrofolate. Residues 217–372 enclose the TrmE-type G domain; that stretch reads GLTTVIAGRP…LRQEIIRRAG (156 aa). Asn227 contributes to the K(+) binding site. Residues 227-232, 246-252, 271-274, and 353-355 contribute to the GTP site; these read NVGKSS, TEIPGTT, DTAG, and SAR. Mg(2+) is bound at residue Ser231. K(+) contacts are provided by Thr246, Ile248, and Thr251. A Mg(2+)-binding site is contributed by Thr252. A (6S)-5-formyl-5,6,7,8-tetrahydrofolate-binding site is contributed by Lys448.

Belongs to the TRAFAC class TrmE-Era-EngA-EngB-Septin-like GTPase superfamily. TrmE GTPase family. Homodimer. Heterotetramer of two MnmE and two MnmG subunits. It depends on K(+) as a cofactor.

It is found in the cytoplasm. Exhibits a very high intrinsic GTPase hydrolysis rate. Involved in the addition of a carboxymethylaminomethyl (cmnm) group at the wobble position (U34) of certain tRNAs, forming tRNA-cmnm(5)s(2)U34. In Methylococcus capsulatus (strain ATCC 33009 / NCIMB 11132 / Bath), this protein is tRNA modification GTPase MnmE.